Reading from the N-terminus, the 380-residue chain is Alanine racemase (380 aa).

K34 serves as the catalytic Proton acceptor; specific for D-alanine. K34 is subject to N6-(pyridoxal phosphate)lysine. R135 is a substrate binding site. The active-site Proton acceptor; specific for L-alanine is Y267. Residue M315 participates in substrate binding.

The protein belongs to the alanine racemase family. Pyridoxal 5'-phosphate is required as a cofactor.

The enzyme catalyses L-alanine = D-alanine. It participates in amino-acid biosynthesis; D-alanine biosynthesis; D-alanine from L-alanine: step 1/1. Catalyzes the interconversion of L-alanine and D-alanine. May also act on other amino acids. This Lawsonia intracellularis (strain PHE/MN1-00) protein is Alanine racemase (alr).